The following is a 499-amino-acid chain: Probable cytosol aminopeptidase (499 aa).

Residues Lys267 and Asp272 each coordinate Mn(2+). Lys279 is an active-site residue. Mn(2+) is bound by residues Asp290, Asp349, and Glu351. Arg353 is an active-site residue.

Belongs to the peptidase M17 family. Requires Mn(2+) as cofactor.

Its subcellular location is the cytoplasm. The catalysed reaction is Release of an N-terminal amino acid, Xaa-|-Yaa-, in which Xaa is preferably Leu, but may be other amino acids including Pro although not Arg or Lys, and Yaa may be Pro. Amino acid amides and methyl esters are also readily hydrolyzed, but rates on arylamides are exceedingly low.. It catalyses the reaction Release of an N-terminal amino acid, preferentially leucine, but not glutamic or aspartic acids.. In terms of biological role, presumably involved in the processing and regular turnover of intracellular proteins. Catalyzes the removal of unsubstituted N-terminal amino acids from various peptides. The polypeptide is Probable cytosol aminopeptidase (Alkaliphilus oremlandii (strain OhILAs) (Clostridium oremlandii (strain OhILAs))).